Consider the following 381-residue polypeptide: E3 ubiquitin-protein ligase RNF13 (381 aa).

Residues 1–34 form the signal peptide; sequence MLLSIGMLMLSATQVYTILTVQLFAFLNLLPVEA. Over 35-182 the chain is Lumenal; the sequence is DILAYNFENA…VPEFSLPLEY (148 aa). The 96-residue stretch at 65–160 folds into the PA domain; sequence KGFLINSKPE…GESSANSLKD (96 aa). N-linked (GlcNAc...) asparagine glycosylation is present at N88. The helical transmembrane segment at 183 to 203 threads the bilayer; the sequence is YLIPFLIIVGICLILIVIFMI. The Cytoplasmic segment spans residues 204–381; it reads TKFVQDRHRA…ERDYNIANTV (178 aa). An RING-type; atypical zinc finger spans residues 240 to 282; it reads CAICLDEYEDGDKLRILPCSHAYHCKCVDPWLTKTKKTCPVCK. The tract at residues 285–381 is disordered; that stretch reads VVPSQGDSDS…ERDYNIANTV (97 aa). Composition is skewed to acidic residues over residues 292 to 304 and 339 to 357; these read SDSD…EENE and SDYE…AENE.

As to quaternary structure, interacts with ERN1. Post-translationally, autoubiquitinated. In terms of tissue distribution, widely expressed (at protein level). In normal pancreas, expressed in islets, but not in ducts, nor in acini (at protein level).

It localises to the endoplasmic reticulum membrane. It is found in the late endosome membrane. Its subcellular location is the lysosome membrane. The protein localises to the nucleus inner membrane. The catalysed reaction is S-ubiquitinyl-[E2 ubiquitin-conjugating enzyme]-L-cysteine + [acceptor protein]-L-lysine = [E2 ubiquitin-conjugating enzyme]-L-cysteine + N(6)-ubiquitinyl-[acceptor protein]-L-lysine.. Its pathway is protein modification; protein ubiquitination. Functionally, E3 ubiquitin-protein ligase that regulates cell proliferation. Involved in apoptosis regulation. Mediates ER stress-induced activation of JNK signaling pathway and apoptosis by promoting ERN1 activation and splicing of XBP1 mRNA. Also involved in protein trafficking and localization. The protein is E3 ubiquitin-protein ligase RNF13 of Homo sapiens (Human).